The sequence spans 382 residues: Mannitol-1-phosphate 5-dehydrogenase (382 aa).

4 to 15 (AVHFGAGNIGRG) is a binding site for NAD(+).

The protein belongs to the mannitol dehydrogenase family. As to quaternary structure, monomer.

The enzyme catalyses D-mannitol 1-phosphate + NAD(+) = beta-D-fructose 6-phosphate + NADH + H(+). This Streptococcus mutans serotype c (strain ATCC 700610 / UA159) protein is Mannitol-1-phosphate 5-dehydrogenase (mtlD).